The following is a 151-amino-acid chain: Small ribosomal subunit protein uS15 (151 aa).

2 positions are modified to phosphoserine: Ser-21 and Ser-32.

It belongs to the universal ribosomal protein uS15 family. As to quaternary structure, component of the small ribosomal subunit (SSU). Mature yeast ribosomes consist of a small (40S) and a large (60S) subunit. The 40S small subunit contains 1 molecule of ribosomal RNA (18S rRNA) and at least 33 different proteins. The large 60S subunit contains 3 rRNA molecules (25S, 5.8S and 5S rRNA) and at least 46 different proteins.

The protein localises to the cytoplasm. Its function is as follows. Component of the ribosome, a large ribonucleoprotein complex responsible for the synthesis of proteins in the cell. The small ribosomal subunit (SSU) binds messenger RNAs (mRNAs) and translates the encoded message by selecting cognate aminoacyl-transfer RNA (tRNA) molecules. The large subunit (LSU) contains the ribosomal catalytic site termed the peptidyl transferase center (PTC), which catalyzes the formation of peptide bonds, thereby polymerizing the amino acids delivered by tRNAs into a polypeptide chain. The nascent polypeptides leave the ribosome through a tunnel in the LSU and interact with protein factors that function in enzymatic processing, targeting, and the membrane insertion of nascent chains at the exit of the ribosomal tunnel. The polypeptide is Small ribosomal subunit protein uS15 (rps13) (Schizosaccharomyces pombe (strain 972 / ATCC 24843) (Fission yeast)).